A 485-amino-acid chain; its full sequence is ATP synthase subunit beta 1 (485 aa).

157-164 (GGAGVGKT) is a binding site for ATP.

This sequence belongs to the ATPase alpha/beta chains family. F-type ATPases have 2 components, CF(1) - the catalytic core - and CF(0) - the membrane proton channel. CF(1) has five subunits: alpha(3), beta(3), gamma(1), delta(1), epsilon(1). CF(0) has three main subunits: a(1), b(2) and c(9-12). The alpha and beta chains form an alternating ring which encloses part of the gamma chain. CF(1) is attached to CF(0) by a central stalk formed by the gamma and epsilon chains, while a peripheral stalk is formed by the delta and b chains.

The protein resides in the cell inner membrane. It catalyses the reaction ATP + H2O + 4 H(+)(in) = ADP + phosphate + 5 H(+)(out). Functionally, produces ATP from ADP in the presence of a proton gradient across the membrane. The catalytic sites are hosted primarily by the beta subunits. This is ATP synthase subunit beta 1 from Psychromonas ingrahamii (strain DSM 17664 / CCUG 51855 / 37).